Reading from the N-terminus, the 185-residue chain is Elongation factor P (185 aa).

It belongs to the elongation factor P family.

Its subcellular location is the cytoplasm. It participates in protein biosynthesis; polypeptide chain elongation. Functionally, involved in peptide bond synthesis. Stimulates efficient translation and peptide-bond synthesis on native or reconstituted 70S ribosomes in vitro. Probably functions indirectly by altering the affinity of the ribosome for aminoacyl-tRNA, thus increasing their reactivity as acceptors for peptidyl transferase. The protein is Elongation factor P (efp) of Lactococcus lactis subsp. lactis (strain IL1403) (Streptococcus lactis).